We begin with the raw amino-acid sequence, 40 residues long: Light-harvesting protein B800/830/1020 beta-1 chain (40 aa).

At 1–20 (ANDIRPLRDFEDEEAQEFHQ) the chain is on the cytoplasmic side. Residues His-19 and His-37 each coordinate a bacteriochlorophyll. The helical transmembrane segment at 21–40 (AAVQAFFLYVAVAFVAHLPV) threads the bilayer.

Belongs to the antenna complex beta subunit family. In terms of assembly, the core complex is formed by different alpha and beta chains, binding bacteriochlorophyll molecules, and arranged most probably in tetrameric structures disposed around the reaction center. The non-pigmented gamma chains may constitute additional components.

The protein resides in the cell inner membrane. Functionally, antenna complexes are light-harvesting systems, which transfer the excitation energy to the reaction centers. The chain is Light-harvesting protein B800/830/1020 beta-1 chain from Halorhodospira halochloris (Ectothiorhodospira halochloris).